A 229-amino-acid chain; its full sequence is MKLSKEISAFCDRIGHRFDRPELLVRALTHASRSTAGRSDNQRLEFLGDRVLGLVMAEALLEADPQAREGQLAPRYNALVRKETCAEVAREIGLGDVLRLGRSEMLTGGRRKDALLGDGMEAVIAAVYRDAGFEAAKALILRLWGKRIGAVEADARDPKTALQEWAQARGLPPPAYIESARSGPDHAPVFTISARLETGACAEAQAGSKRQAEQAAAKALLAQVESNHD.

The RNase III domain occupies 7–132; it reads ISAFCDRIGH…VIAAVYRDAG (126 aa). Glu-45 serves as a coordination point for Mg(2+). Residue Asp-49 is part of the active site. Mg(2+) is bound by residues Asp-118 and Glu-121. The active site involves Glu-121. Residues 157-226 enclose the DRBM domain; the sequence is DPKTALQEWA…AKALLAQVES (70 aa).

This sequence belongs to the ribonuclease III family. Homodimer. Requires Mg(2+) as cofactor.

The protein resides in the cytoplasm. The enzyme catalyses Endonucleolytic cleavage to 5'-phosphomonoester.. Digests double-stranded RNA. Involved in the processing of primary rRNA transcript to yield the immediate precursors to the large and small rRNAs (23S and 16S). Processes some mRNAs, and tRNAs when they are encoded in the rRNA operon. Processes pre-crRNA and tracrRNA of type II CRISPR loci if present in the organism. The polypeptide is Ribonuclease 3 (Dinoroseobacter shibae (strain DSM 16493 / NCIMB 14021 / DFL 12)).